Here is a 139-residue protein sequence, read N- to C-terminus: Putative pre-16S rRNA nuclease (139 aa).

Belongs to the YqgF nuclease family.

The protein localises to the cytoplasm. Could be a nuclease involved in processing of the 5'-end of pre-16S rRNA. This chain is Putative pre-16S rRNA nuclease, found in Streptococcus pneumoniae serotype 19F (strain G54).